A 305-amino-acid polypeptide reads, in one-letter code: Recombination-associated protein RdgC (305 aa).

It belongs to the RdgC family.

It is found in the cytoplasm. The protein localises to the nucleoid. May be involved in recombination. This chain is Recombination-associated protein RdgC, found in Sodalis glossinidius (strain morsitans).